A 116-amino-acid polypeptide reads, in one-letter code: Large ribosomal subunit protein uL18 (116 aa).

Belongs to the universal ribosomal protein uL18 family. As to quaternary structure, part of the 50S ribosomal subunit; part of the 5S rRNA/L5/L18/L25 subcomplex. Contacts the 5S and 23S rRNAs.

Functionally, this is one of the proteins that bind and probably mediate the attachment of the 5S RNA into the large ribosomal subunit, where it forms part of the central protuberance. In Cellvibrio japonicus (strain Ueda107) (Pseudomonas fluorescens subsp. cellulosa), this protein is Large ribosomal subunit protein uL18.